A 669-amino-acid polypeptide reads, in one-letter code: DNA polymerase epsilon subunit B (669 aa).

The interval 96 to 115 (QISTRNGSADNLAKKAERSD) is disordered.

The protein belongs to the DNA polymerase epsilon subunit B family. Heterotetramer. Consists of four subunits: POL2, DPB2, DPB3 and DPB4.

The protein resides in the nucleus. Functionally, as accessory component of the DNA polymerase epsilon (DNA polymerase II) participates in chromosomal DNA replication. This is DNA polymerase epsilon subunit B (DPB2) from Debaryomyces hansenii (strain ATCC 36239 / CBS 767 / BCRC 21394 / JCM 1990 / NBRC 0083 / IGC 2968) (Yeast).